Here is an 806-residue protein sequence, read N- to C-terminus: Lon protease (806 aa).

The 194-residue stretch at Tyr14–Ile207 folds into the Lon N-terminal domain. Gly359–Thr366 provides a ligand contact to ATP. In terms of domain architecture, Lon proteolytic spans Asp594–Arg775. Residues Ser681 and Lys724 contribute to the active site. The tract at residues Ser786–His806 is disordered.

It belongs to the peptidase S16 family. As to quaternary structure, homohexamer. Organized in a ring with a central cavity.

The protein resides in the cytoplasm. It carries out the reaction Hydrolysis of proteins in presence of ATP.. In terms of biological role, ATP-dependent serine protease that mediates the selective degradation of mutant and abnormal proteins as well as certain short-lived regulatory proteins. Required for cellular homeostasis and for survival from DNA damage and developmental changes induced by stress. Degrades polypeptides processively to yield small peptide fragments that are 5 to 10 amino acids long. Binds to DNA in a double-stranded, site-specific manner. In R.meliloti it is important for controlling the turnover of a constitutively expressed protein(s) that, when unregulated, disrupts normal nodule formation and normal growth. This chain is Lon protease, found in Rhizobium meliloti (strain 1021) (Ensifer meliloti).